Consider the following 156-residue polypeptide: 6,7-dimethyl-8-ribityllumazine synthase (156 aa).

5-amino-6-(D-ribitylamino)uracil is bound by residues Phe23, 57–59, and 81–83; these read AYE and AII. 86–87 contacts (2S)-2-hydroxy-3-oxobutyl phosphate; the sequence is GT. The Proton donor role is filled by His89. Phe114 is a 5-amino-6-(D-ribitylamino)uracil binding site. Arg128 contacts (2S)-2-hydroxy-3-oxobutyl phosphate.

This sequence belongs to the DMRL synthase family.

It catalyses the reaction (2S)-2-hydroxy-3-oxobutyl phosphate + 5-amino-6-(D-ribitylamino)uracil = 6,7-dimethyl-8-(1-D-ribityl)lumazine + phosphate + 2 H2O + H(+). It participates in cofactor biosynthesis; riboflavin biosynthesis; riboflavin from 2-hydroxy-3-oxobutyl phosphate and 5-amino-6-(D-ribitylamino)uracil: step 1/2. In terms of biological role, catalyzes the formation of 6,7-dimethyl-8-ribityllumazine by condensation of 5-amino-6-(D-ribitylamino)uracil with 3,4-dihydroxy-2-butanone 4-phosphate. This is the penultimate step in the biosynthesis of riboflavin. In Helicobacter pylori (strain ATCC 700392 / 26695) (Campylobacter pylori), this protein is 6,7-dimethyl-8-ribityllumazine synthase.